The sequence spans 154 residues: Protein LOL1 (154 aa).

Putative zinc finger stretches follow at residues 34-64 (QLVC…VTAV), 73-103 (QLVC…VNLA), and 111-141 (HVNC…VTSV).

It localises to the nucleus. Functionally, positive regulator of reactive oxygen-induced cell death. May be involved in the repression of the copper/zinc superoxide dismutase CSD1 and CSD2 that detoxify accumulating superoxide before the reactive oxygen species (ROS) can trigger a cell death cascade. LSD1 and LOL1 have antagonistic effects on CSD1 and CSD2 accumulation to regulate oxidative stress-induced cell death. The protein is Protein LOL1 (LOL1) of Arabidopsis thaliana (Mouse-ear cress).